Here is a 379-residue protein sequence, read N- to C-terminus: 8-amino-7-oxononanoate synthase (379 aa).

R27 and R34 together coordinate substrate. Pyridoxal 5'-phosphate is bound at residue 114 to 115 (GY). H139 contacts substrate. Pyridoxal 5'-phosphate-binding positions include S187, 212–215 (DDAH), and 232–235 (TLSK). K235 bears the N6-(pyridoxal phosphate)lysine mark. T344 is a binding site for substrate.

It belongs to the class-II pyridoxal-phosphate-dependent aminotransferase family. BioF subfamily. Homodimer. Pyridoxal 5'-phosphate serves as cofactor.

The catalysed reaction is 6-carboxyhexanoyl-[ACP] + L-alanine + H(+) = (8S)-8-amino-7-oxononanoate + holo-[ACP] + CO2. It participates in cofactor biosynthesis; biotin biosynthesis. Its function is as follows. Catalyzes the decarboxylative condensation of pimeloyl-[acyl-carrier protein] and L-alanine to produce 8-amino-7-oxononanoate (AON), [acyl-carrier protein], and carbon dioxide. The sequence is that of 8-amino-7-oxononanoate synthase from Methylobacterium sp. (strain 4-46).